The sequence spans 347 residues: NADH-ubiquinone oxidoreductase chain 2 (347 aa).

Transmembrane regions (helical) follow at residues 1 to 21 (MNPL…AIVM), 25 to 45 (HWLT…PMLM), 59 to 79 (YFLT…MNLT), 96 to 116 (IIMT…FWVP), 127 to 147 (CLIL…MISP), 149 to 169 (INLN…GWGG), 178 to 198 (IMAY…AYNP), 200 to 220 (MTML…MLLI), 247 to 267 (IMLS…WMII), 276 to 296 (IIMP…YMRL), and 325 to 345 (LLSP…MMSL).

This sequence belongs to the complex I subunit 2 family. As to quaternary structure, core subunit of respiratory chain NADH dehydrogenase (Complex I) which is composed of 45 different subunits. Interacts with TMEM242.

It is found in the mitochondrion inner membrane. The catalysed reaction is a ubiquinone + NADH + 5 H(+)(in) = a ubiquinol + NAD(+) + 4 H(+)(out). Its function is as follows. Core subunit of the mitochondrial membrane respiratory chain NADH dehydrogenase (Complex I) which catalyzes electron transfer from NADH through the respiratory chain, using ubiquinone as an electron acceptor. Essential for the catalytic activity and assembly of complex I. This is NADH-ubiquinone oxidoreductase chain 2 from Natalus stramineus (Mexican funnel-eared bat).